A 243-amino-acid chain; its full sequence is Triosephosphate isomerase (243 aa).

Residue 9–11 participates in substrate binding; that stretch reads NWK. The Electrophile role is filled by His-96. Glu-165 functions as the Proton acceptor in the catalytic mechanism. Substrate-binding positions include Gly-171, Ser-204, and 225–226; that span reads GG.

This sequence belongs to the triosephosphate isomerase family. In terms of assembly, homodimer.

The protein localises to the cytoplasm. It catalyses the reaction D-glyceraldehyde 3-phosphate = dihydroxyacetone phosphate. Its pathway is carbohydrate biosynthesis; gluconeogenesis. It participates in carbohydrate degradation; glycolysis; D-glyceraldehyde 3-phosphate from glycerone phosphate: step 1/1. Its function is as follows. Involved in the gluconeogenesis. Catalyzes stereospecifically the conversion of dihydroxyacetone phosphate (DHAP) to D-glyceraldehyde-3-phosphate (G3P). The polypeptide is Triosephosphate isomerase (Prochlorococcus marinus (strain SARG / CCMP1375 / SS120)).